Here is a 121-residue protein sequence, read N- to C-terminus: Large ribosomal subunit protein bL12 (121 aa).

This sequence belongs to the bacterial ribosomal protein bL12 family. As to quaternary structure, homodimer. Part of the ribosomal stalk of the 50S ribosomal subunit. Forms a multimeric L10(L12)X complex, where L10 forms an elongated spine to which 2 to 4 L12 dimers bind in a sequential fashion. Binds GTP-bound translation factors.

Forms part of the ribosomal stalk which helps the ribosome interact with GTP-bound translation factors. Is thus essential for accurate translation. The protein is Large ribosomal subunit protein bL12 of Streptococcus suis (strain 98HAH33).